The primary structure comprises 1344 residues: Myb-binding protein 1A (1344 aa).

A disordered region spans residues 1–24 (MAEMKSPTKAEPATPAEAAQSDRH). The residue at position 2 (Ala-2) is an N-acetylalanine. The tract at residues 2–580 (AEMKSPTKAE…WDQMMSTLKE (579 aa)) is interaction with MYB. A compositionally biased stretch (low complexity) spans 7–19 (PTKAEPATPAEAA). Residues Lys-69 and Lys-156 each carry the N6-acetyllysine modification. Short sequence motifs (nuclear export signal) lie at residues 238 to 256 (SEDNIPSLVNILKVAANSV) and 261 to 279 (KLPNVALDLLRLALKESRF). 2 disordered regions span residues 710–751 (DEKQ…DKDV) and 1146–1344 (QRPK…VQTP). Residues 732–747 (SDMDSEDGEESEEEDR) are compositionally biased toward acidic residues. Positions 1148 to 1159 (PKSEKKNAKDIP) are enriched in basic and acidic residues. Residue Lys-1149 forms a Glycyl lysine isopeptide (Lys-Gly) (interchain with G-Cter in SUMO2) linkage. The required for nuclear and nucleolar localization stretch occupies residues 1152–1344 (KKNAKDIPSD…RVASRRVQTP (193 aa)). Phosphoserine is present on residues Ser-1160 and Ser-1164. Residues 1168-1185 (TKRKKKGFLPETKKRKKL) show a composition bias toward basic residues. Position 1187 is a phosphoserine (Ser-1187). Polar residues predominate over residues 1188–1202 (EGTTPEKNAASQQDA). At Thr-1191 the chain carries Phosphothreonine. Phosphoserine is present on residues Ser-1219 and Ser-1244. The span at 1249 to 1258 (NPTLSPSTPA) shows a compositional bias: polar residues. Phosphothreonine is present on Thr-1251. Phosphoserine is present on Ser-1253. Phosphothreonine is present on residues Thr-1256 and Thr-1277. A phosphoserine mark is found at Ser-1280, Ser-1303, and Ser-1318. A compositionally biased stretch (low complexity) spans 1317–1329 (LSLVSRSPSLLQS). Residue Arg-1322 is modified to Citrulline. Residues Ser-1323, Ser-1325, and Ser-1329 each carry the phosphoserine modification.

This sequence belongs to the MYBBP1A family. In terms of assembly, component of the B-WICH complex, at least composed of SMARCA5/SNF2H, BAZ1B/WSTF, SF3B1, DEK, MYO1C, ERCC6, MYBBP1A and DDX21. Binds to and represses JUN and MYB via the leucine zipper regions present in these proteins. Also binds to and represses PPARGC1A: this interaction is abrogated when PPARGC1A is phosphorylated by MAPK1/ERK. Binds to and stimulates transcription by AHR. Binds to KPNA2. Interacts with CLOCK and CRY1. In terms of processing, citrullinated by PADI4. As to expression, ubiquitously expressed.

The protein resides in the nucleus. Its subcellular location is the nucleolus. It localises to the cytoplasm. Functionally, may activate or repress transcription via interactions with sequence specific DNA-binding proteins. Repression may be mediated at least in part by histone deacetylase activity (HDAC activity). Acts as a corepressor and in concert with CRY1, represses the transcription of the core circadian clock component PER2. Preferentially binds to dimethylated histone H3 'Lys-9' (H3K9me2) on the PER2 promoter. Has a role in rRNA biogenesis together with PWP1. This chain is Myb-binding protein 1A (Mybbp1a), found in Mus musculus (Mouse).